A 118-amino-acid chain; its full sequence is Ribonuclease P protein component (118 aa).

The protein belongs to the RnpA family. As to quaternary structure, consists of a catalytic RNA component (M1 or rnpB) and a protein subunit.

The enzyme catalyses Endonucleolytic cleavage of RNA, removing 5'-extranucleotides from tRNA precursor.. Functionally, RNaseP catalyzes the removal of the 5'-leader sequence from pre-tRNA to produce the mature 5'-terminus. It can also cleave other RNA substrates such as 4.5S RNA. The protein component plays an auxiliary but essential role in vivo by binding to the 5'-leader sequence and broadening the substrate specificity of the ribozyme. The protein is Ribonuclease P protein component of Vibrio parahaemolyticus serotype O3:K6 (strain RIMD 2210633).